A 273-amino-acid polypeptide reads, in one-letter code: Ribosomal RNA small subunit methyltransferase A (273 aa).

Residues N23, I25, G50, E72, D97, and N116 each coordinate S-adenosyl-L-methionine.

The protein belongs to the class I-like SAM-binding methyltransferase superfamily. rRNA adenine N(6)-methyltransferase family. RsmA subfamily.

The protein localises to the cytoplasm. It carries out the reaction adenosine(1518)/adenosine(1519) in 16S rRNA + 4 S-adenosyl-L-methionine = N(6)-dimethyladenosine(1518)/N(6)-dimethyladenosine(1519) in 16S rRNA + 4 S-adenosyl-L-homocysteine + 4 H(+). In terms of biological role, specifically dimethylates two adjacent adenosines (A1518 and A1519) in the loop of a conserved hairpin near the 3'-end of 16S rRNA in the 30S particle. May play a critical role in biogenesis of 30S subunits. The chain is Ribosomal RNA small subunit methyltransferase A from Rickettsia akari (strain Hartford).